The chain runs to 381 residues: Chaperone protein DnaJ (381 aa).

In terms of domain architecture, J spans 3–66; it reads DYYETLGVER…DKRRMYDSGV (64 aa). The CR-type zinc finger occupies 129-211; sequence GGTAHVKINT…CMGHGRVRTT (83 aa). Residues Cys142, Cys145, Cys159, Cys162, Cys185, Cys188, Cys199, and Cys202 each coordinate Zn(2+). CXXCXGXG motif repeat units follow at residues 142–149, 159–166, 185–192, and 199–206; these read CQECGGSG, CPDCHGQG, CERCEGHG, and CPSCMGHG. Residues 355 to 381 are disordered; sequence ATHVSQASRPQAGQKKGFFSKLKDALS. Polar residues predominate over residues 356 to 365; sequence THVSQASRPQ.

This sequence belongs to the DnaJ family. As to quaternary structure, homodimer. Zn(2+) is required as a cofactor.

Its subcellular location is the cytoplasm. Its function is as follows. Participates actively in the response to hyperosmotic and heat shock by preventing the aggregation of stress-denatured proteins and by disaggregating proteins, also in an autonomous, DnaK-independent fashion. Unfolded proteins bind initially to DnaJ; upon interaction with the DnaJ-bound protein, DnaK hydrolyzes its bound ATP, resulting in the formation of a stable complex. GrpE releases ADP from DnaK; ATP binding to DnaK triggers the release of the substrate protein, thus completing the reaction cycle. Several rounds of ATP-dependent interactions between DnaJ, DnaK and GrpE are required for fully efficient folding. Also involved, together with DnaK and GrpE, in the DNA replication of plasmids through activation of initiation proteins. This is Chaperone protein DnaJ from Bifidobacterium longum (strain NCC 2705).